The chain runs to 156 residues: Putative HTH-type transcriptional regulator YwgB (156 aa).

The HTH rrf2-type domain maps to Lys-2 to Asp-133.

The polypeptide is Putative HTH-type transcriptional regulator YwgB (ywgB) (Bacillus subtilis (strain 168)).